Reading from the N-terminus, the 702-residue chain is MA3 DOMAIN-CONTAINING TRANSLATION REGULATORY FACTOR 1 (702 aa).

The segment at 39 to 66 is disordered; that stretch reads LNIKSPTGGKGPVAGIPNRHVRRTHSGK. Residues 57 to 66 show a composition bias toward basic residues; sequence RHVRRTHSGK. The MI 1 domain occupies 122-243; sequence DYKKSVVSII…PPVFLVRSKK (122 aa). The Nuclear localization signal 1 motif lies at 273–280; it reads EKKWGGST. MI domains follow at residues 286–407, 420–541, and 583–702; these read ETKK…TSDQ, QYKK…DIST, and DAKD…SATQ. A Nuclear localization signal 2 motif is present at residues 458 to 465; it reads LKRLITLA.

It belongs to the PDCD4 family. In terms of assembly, binds to EIF4A1, S6K1 and S6K2. The association with ribosomes is modulated by cellular energy status and TOR activity. Phosphorylation by S6 kinases (e.g. S6K1 and S6K2) is modulated by cellular energy status and TOR activity. As to expression, mostly expressed in vegetative tissues, such as leaves, roots and stems, and, to a lower extent, in reproductive tissues, such as flower buds and flowers.

Its subcellular location is the nucleus. It is found in the cytoplasm. The protein resides in the cytosol. In terms of biological role, involved in target of rapamycin (TOR)-regulated translation control, especially under energy-deficient conditions. The protein is MA3 DOMAIN-CONTAINING TRANSLATION REGULATORY FACTOR 1 of Arabidopsis thaliana (Mouse-ear cress).